Consider the following 434-residue polypeptide: MQVSVEATQGLERRLTISVPAEQIEKLVKDSLQREAKRARIPGFRPGKVPVTVINKRYGAAIRQDITGEVMQRNFIEAIIAEKLNPAGAPTFIPGSTDSEKFEFVATFEIYPEVELKGLDAIEVEQPKASVTDADVDSMIETLRKQHATYAAVEREAADGDKVKMNFVGSVDGEEFEGGKAEDFELQLGSGRMIPGFEAGILGHKAGEEFVIDVNFPEEYHAENLKGKAAKFAITLTEVQAANLPEVNDEFAALFGINEGGLEALKTEIRKNMNRELEQALKANVKEQVIAGLLANNDIELPKALIDGEVNVLRQQAMQRFGGQTANMPELPAELFTEQAARRVKIGLLLGEVIKTNELKAEDERVQGLIASMASAYEDPSEVIAYYNSNKELMQNMRNVALEEQAVEALLKSAKVTEKEVAFEEFMNKATGRA.

A PPIase FKBP-type domain is found at glycine 160–proline 245.

Belongs to the FKBP-type PPIase family. Tig subfamily.

It localises to the cytoplasm. It carries out the reaction [protein]-peptidylproline (omega=180) = [protein]-peptidylproline (omega=0). Involved in protein export. Acts as a chaperone by maintaining the newly synthesized protein in an open conformation. Functions as a peptidyl-prolyl cis-trans isomerase. This chain is Trigger factor, found in Shewanella putrefaciens (strain CN-32 / ATCC BAA-453).